Consider the following 463-residue polypeptide: Phosphoglucosamine mutase (463 aa).

The active-site Phosphoserine intermediate is the S108. Residues S108, D247, D249, and D251 each coordinate Mg(2+). S108 is subject to Phosphoserine.

It belongs to the phosphohexose mutase family. It depends on Mg(2+) as a cofactor. Activated by phosphorylation.

The catalysed reaction is alpha-D-glucosamine 1-phosphate = D-glucosamine 6-phosphate. Catalyzes the conversion of glucosamine-6-phosphate to glucosamine-1-phosphate. This is Phosphoglucosamine mutase from Nitrosospira multiformis (strain ATCC 25196 / NCIMB 11849 / C 71).